The sequence spans 280 residues: CAG pathogenicity island protein 12 (280 aa).

Residues 1–20 (MKLRASVLIGATILCLILSA) form the signal peptide. C21 is lipidated: N-palmitoyl cysteine. Residue C21 is the site of S-diacylglycerol cysteine attachment.

Its subcellular location is the cell membrane. The protein is CAG pathogenicity island protein 12 (cagT) of Helicobacter pylori (strain ATCC 700392 / 26695) (Campylobacter pylori).